Here is a 66-residue protein sequence, read N- to C-terminus: RICDDSSIPFLRTPQLCPKGQDVCYKKTPIVKKFKWLQKKGCASSCPKDGFIKIFKIECCTKDNCI.

4 cysteine pairs are disulfide-bonded: C3-C24, C17-C42, C46-C59, and C60-C65.

As to expression, expressed by the venom gland.

Its subcellular location is the secreted. In terms of biological role, no toxicity is observed upon intravenous or intracerebroventricular injection into mice. Has no cytotoxic activity towards C2C12 cells at 100 ug/ml. The polypeptide is Clarkitoxin-I-Mdum (Micrurus dumerilii (Coral snake)).